A 369-amino-acid polypeptide reads, in one-letter code: UDP-N-acetylglucosamine--N-acetylmuramyl-(pentapeptide) pyrophosphoryl-undecaprenol N-acetylglucosamine transferase (369 aa).

UDP-N-acetyl-alpha-D-glucosamine-binding positions include 15–17, Asn126, Arg169, Ser197, and Gln299; that span reads TGG.

Belongs to the glycosyltransferase 28 family. MurG subfamily.

The protein localises to the cell inner membrane. It catalyses the reaction di-trans,octa-cis-undecaprenyl diphospho-N-acetyl-alpha-D-muramoyl-L-alanyl-D-glutamyl-meso-2,6-diaminopimeloyl-D-alanyl-D-alanine + UDP-N-acetyl-alpha-D-glucosamine = di-trans,octa-cis-undecaprenyl diphospho-[N-acetyl-alpha-D-glucosaminyl-(1-&gt;4)]-N-acetyl-alpha-D-muramoyl-L-alanyl-D-glutamyl-meso-2,6-diaminopimeloyl-D-alanyl-D-alanine + UDP + H(+). It participates in cell wall biogenesis; peptidoglycan biosynthesis. Functionally, cell wall formation. Catalyzes the transfer of a GlcNAc subunit on undecaprenyl-pyrophosphoryl-MurNAc-pentapeptide (lipid intermediate I) to form undecaprenyl-pyrophosphoryl-MurNAc-(pentapeptide)GlcNAc (lipid intermediate II). The chain is UDP-N-acetylglucosamine--N-acetylmuramyl-(pentapeptide) pyrophosphoryl-undecaprenol N-acetylglucosamine transferase from Methylobacterium radiotolerans (strain ATCC 27329 / DSM 1819 / JCM 2831 / NBRC 15690 / NCIMB 10815 / 0-1).